The sequence spans 430 residues: Ribosomal protein uS12 methylthiotransferase RimO (430 aa).

The region spanning leucine 4 to lysine 119 is the MTTase N-terminal domain. Positions 13, 49, 82, 141, 145, and 148 each coordinate [4Fe-4S] cluster. Residues serine 127–glutamine 358 enclose the Radical SAM core domain. In terms of domain architecture, TRAM spans lysine 361–glutamate 430.

The protein belongs to the methylthiotransferase family. RimO subfamily. [4Fe-4S] cluster is required as a cofactor.

The protein resides in the cytoplasm. It carries out the reaction L-aspartate(89)-[ribosomal protein uS12]-hydrogen + (sulfur carrier)-SH + AH2 + 2 S-adenosyl-L-methionine = 3-methylsulfanyl-L-aspartate(89)-[ribosomal protein uS12]-hydrogen + (sulfur carrier)-H + 5'-deoxyadenosine + L-methionine + A + S-adenosyl-L-homocysteine + 2 H(+). In terms of biological role, catalyzes the methylthiolation of an aspartic acid residue of ribosomal protein uS12. The chain is Ribosomal protein uS12 methylthiotransferase RimO from Sulfurihydrogenibium sp. (strain YO3AOP1).